A 314-amino-acid polypeptide reads, in one-letter code: Small ribosomal subunit protein uS11m (314 aa).

The N-terminal 37 residues, 1–37 (MNGVSRHLRASSLLSLIRSYGGINSVCRFSSQSDGFS), are a transit peptide targeting the mitochondrion. Residues 34-138 (DGFSGGRFRE…GSGFSAPSLS (105 aa)) form a disordered region. The span at 50 to 63 (ESANNSGLSNTGRI) shows a compositional bias: polar residues. Residues 103-114 (SSLRSRLPNSLP) show a composition bias toward low complexity.

Belongs to the universal ribosomal protein uS11 family. In terms of assembly, component of the mitochondrial ribosome small subunit (28S) which comprises a 12S rRNA and about 30 distinct proteins.

It localises to the mitochondrion. Required for karyogamy during female gametophyte development, when the two polar nuclei fuse to form the diploid central cell nucleus. This chain is Small ribosomal subunit protein uS11m, found in Arabidopsis thaliana (Mouse-ear cress).